The following is a 224-amino-acid chain: Holliday junction branch migration complex subunit RuvA (224 aa).

The tract at residues 1 to 64 (MIGKVAGILD…EDLLQLFGFP (64 aa)) is domain I. The interval 65 to 143 (TMIEKEWHRL…ALMAMGGGTA (79 aa)) is domain II. The tract at residues 141–185 (GTAALAPSEPPEPQPGTSSGSRRKTRAPEPPRPSHTADALSALAN) is disordered. The tract at residues 144 to 170 (ALAPSEPPEPQPGTSSGSRRKTRAPEP) is flexible linker. Positions 171 to 224 (PRPSHTADALSALANLGYQPTDAAQAVAQAAGESPDADTAALIRAALKLLAPKS) are domain III.

It belongs to the RuvA family. As to quaternary structure, homotetramer. Forms an RuvA(8)-RuvB(12)-Holliday junction (HJ) complex. HJ DNA is sandwiched between 2 RuvA tetramers; dsDNA enters through RuvA and exits via RuvB. An RuvB hexamer assembles on each DNA strand where it exits the tetramer. Each RuvB hexamer is contacted by two RuvA subunits (via domain III) on 2 adjacent RuvB subunits; this complex drives branch migration. In the full resolvosome a probable DNA-RuvA(4)-RuvB(12)-RuvC(2) complex forms which resolves the HJ.

Its subcellular location is the cytoplasm. In terms of biological role, the RuvA-RuvB-RuvC complex processes Holliday junction (HJ) DNA during genetic recombination and DNA repair, while the RuvA-RuvB complex plays an important role in the rescue of blocked DNA replication forks via replication fork reversal (RFR). RuvA specifically binds to HJ cruciform DNA, conferring on it an open structure. The RuvB hexamer acts as an ATP-dependent pump, pulling dsDNA into and through the RuvAB complex. HJ branch migration allows RuvC to scan DNA until it finds its consensus sequence, where it cleaves and resolves the cruciform DNA. The protein is Holliday junction branch migration complex subunit RuvA of Cereibacter sphaeroides (strain KD131 / KCTC 12085) (Rhodobacter sphaeroides).